The sequence spans 234 residues: uncharacterized protein (234 aa).

4 consecutive transmembrane segments (helical) span residues 28 to 48 (IVII…SIIS), 67 to 87 (FQIF…FDPI), 123 to 143 (GGVD…SGTI), and 154 to 174 (LYCI…GLLY).

The protein belongs to the complex I subunit 2 family.

It is found in the mitochondrion membrane. This is an uncharacterized protein from Neurospora crassa (strain ATCC 24698 / 74-OR23-1A / CBS 708.71 / DSM 1257 / FGSC 987).